Here is a 186-residue protein sequence, read N- to C-terminus: Large ribosomal subunit protein uL5 (186 aa).

Belongs to the universal ribosomal protein uL5 family. As to quaternary structure, part of the 50S ribosomal subunit; part of the 5S rRNA/L5/L18/L25 subcomplex. Contacts the 5S rRNA and the P site tRNA. Forms a bridge to the 30S subunit in the 70S ribosome.

Functionally, this is one of the proteins that bind and probably mediate the attachment of the 5S RNA into the large ribosomal subunit, where it forms part of the central protuberance. In the 70S ribosome it contacts protein S13 of the 30S subunit (bridge B1b), connecting the 2 subunits; this bridge is implicated in subunit movement. Contacts the P site tRNA; the 5S rRNA and some of its associated proteins might help stabilize positioning of ribosome-bound tRNAs. The sequence is that of Large ribosomal subunit protein uL5 from Mycoplasmopsis synoviae (strain 53) (Mycoplasma synoviae).